An 800-amino-acid polypeptide reads, in one-letter code: Signaling protein YkoW (800 aa).

A run of 7 helical transmembrane segments spans residues V5–L27, W44–A66, E76–V98, L103–I125, I135–L157, V178–F200, and T215–S237. Positions Y7–H201 constitute an MHYT domain. Residues Q255–A319 enclose the PAS domain. One can recognise a GGDEF domain in the interval Y402–F536. The EAL domain maps to K545–P798.

The protein localises to the cell membrane. Functionally, probable signaling protein whose physiological role is not yet known. This chain is Signaling protein YkoW (ykoW), found in Bacillus subtilis (strain 168).